A 496-amino-acid chain; its full sequence is Fibronectin type III and SPRY domain-containing protein 1 (496 aa).

Residues 4-99 adopt a coiled-coil conformation; sequence QREALRKIIK…ALESSEELLE (96 aa). Positions 105–162 constitute a COS domain; the sequence is LQAMDSEDFPQAAKQIKDGVTMAPAFRLSLKAKVSDNMSHLMVDFAQERQMLQALKFL. Positions 164 to 268 constitute a Fibronectin type-III domain; sequence VPSAPVIDLA…EPVTLETPAF (105 aa). The B30.2/SPRY domain maps to 268 to 477; that stretch reads FMFRLDASTS…VTTGLQVPSA (210 aa). The interval 301 to 336 is disordered; sequence KAREKDGKGRTASPINSPARGTPSPKRMPSGRGGRD. An omega-N-methylarginine mark is found at Arg-310 and Arg-320.

Oligomerization is required for binding to microtubules. As to expression, highly expressed in brain tissues, including cerebellum, cerebral cortex, medulla, occipital pole, frontal lobe, temporal lobe and putamen. Lower expression in spinal cord.

The protein resides in the cytoplasm. It is found in the cytoskeleton. It localises to the microtubule organizing center. Its subcellular location is the centrosome. The protein localises to the nucleus. The protein resides in the cleavage furrow. In terms of biological role, may be involved in microtubule organization and stabilization. The protein is Fibronectin type III and SPRY domain-containing protein 1 (FSD1) of Homo sapiens (Human).